The chain runs to 586 residues: Malonate--CoA ligase ACSF3, mitochondrial (586 aa).

A mitochondrion-targeting transit peptide spans Met-1–Cys-89. ATP contacts are provided by residues Thr-203–Lys-211, Asp-457, Arg-471, and Lys-563.

This sequence belongs to the ATP-dependent AMP-binding enzyme family.

Its subcellular location is the mitochondrion. The enzyme catalyses tetracosanoate + ATP + CoA = tetracosanoyl-CoA + AMP + diphosphate. It carries out the reaction malonate + ATP + CoA = malonyl-CoA + AMP + diphosphate. Functionally, catalyzes the initial reaction in intramitochondrial fatty acid synthesis, by activating malonate and methylmalonate, but not acetate, into their respective CoA thioester. May have some preference toward very-long-chain substrates. This chain is Malonate--CoA ligase ACSF3, mitochondrial, found in Bos taurus (Bovine).